The sequence spans 791 residues: Leucine-rich repeat-containing protein SOG2 (791 aa).

Residues 1-28 (MVATSSKRTLDPKEEHLPADKTSTNSSN) are disordered. The segment covering 8–19 (RTLDPKEEHLPA) has biased composition (basic and acidic residues). LRR repeat units follow at residues 43–64 (SGTT…DVGY), 67–88 (NVER…FKRL), 90–111 (RLQY…LTQC), 113–134 (QLEI…ISSF), 138–159 (NIRV…KSIT), and 163–183 (KLSI…DQVQ). Thr214 carries the phosphothreonine modification. Disordered stretches follow at residues 454 to 506 (ASKA…TPSA) and 534 to 569 (HTHG…PRQQ). Over residues 469–486 (SSSSITSGGGPAASTTST) the composition is skewed to low complexity. A compositionally biased stretch (polar residues) spans 544-569 (NAISNGSSQTNMNEVKTTSDTIPRQQ).

It is found in the cytoplasm. In terms of biological role, required for proper cell morphogenesis and cell separation after mitosis. Functions in the RAM (regulation of ACE2 activity and cellular morphogenesis) signaling network and is required for proper ACE2 localization and CBK1 kinase activity. This Saccharomyces cerevisiae (strain ATCC 204508 / S288c) (Baker's yeast) protein is Leucine-rich repeat-containing protein SOG2.